The chain runs to 334 residues: Putative transport protein MTH_1211 (334 aa).

Helical transmembrane passes span 24–44, 60–80, 84–104, 131–151, 189–209, 220–240, 255–275, and 289–309; these read AIVV…AYIV, VSII…LVFT, IINS…PGAG, YVVA…VFLS, VLLS…LMAA, AILL…GPWA, ILRG…DIYL, and MIFL…GFIV.

It belongs to the autoinducer-2 exporter (AI-2E) (TC 2.A.86) family.

It is found in the cell membrane. In Methanothermobacter thermautotrophicus (strain ATCC 29096 / DSM 1053 / JCM 10044 / NBRC 100330 / Delta H) (Methanobacterium thermoautotrophicum), this protein is Putative transport protein MTH_1211.